The sequence spans 170 residues: Arginine repressor (170 aa).

Belongs to the ArgR family.

The protein resides in the cytoplasm. Its pathway is amino-acid biosynthesis; L-arginine biosynthesis [regulation]. In terms of biological role, regulates arginine biosynthesis genes. In Bifidobacterium longum (strain DJO10A), this protein is Arginine repressor.